The following is a 101-amino-acid chain: Cell cycle protein GpsB (101 aa).

A coiled-coil region spans residues 34 to 71; it reads LDMVIKDYETFNQEIEKLQQENLHLSKQLEEAVEQGKR.

This sequence belongs to the GpsB family. As to quaternary structure, forms polymers through the coiled coil domains. Interacts with PBP1, MreC and EzrA.

Its subcellular location is the cytoplasm. Divisome component that associates with the complex late in its assembly, after the Z-ring is formed, and is dependent on DivIC and PBP2B for its recruitment to the divisome. Together with EzrA, is a key component of the system that regulates PBP1 localization during cell cycle progression. Its main role could be the removal of PBP1 from the cell pole after pole maturation is completed. Also contributes to the recruitment of PBP1 to the division complex. Not essential for septum formation. The protein is Cell cycle protein GpsB of Bacillus pumilus (strain SAFR-032).